The chain runs to 249 residues: DNA repair protein RecO (249 aa).

This sequence belongs to the RecO family.

In terms of biological role, involved in DNA repair and RecF pathway recombination. This is DNA repair protein RecO from Exiguobacterium sp. (strain ATCC BAA-1283 / AT1b).